The primary structure comprises 88 residues: Apolipoprotein C-I (88 aa).

An N-terminal signal peptide occupies residues 1–26 (MRLLISLPVLIVVLAMALEGPAPAQA).

The protein belongs to the apolipoprotein C1 family.

Its subcellular location is the secreted. Functionally, inhibitor of lipoprotein binding to the low density lipoprotein (LDL) receptor, LDL receptor-related protein, and very low density lipoprotein (VLDL) receptor. Associates with high density lipoproteins (HDL) and the triacylglycerol-rich lipoproteins in the plasma and makes up about 10% of the protein of the VLDL and 2% of that of HDL. Appears to interfere directly with fatty acid uptake and is also the major plasma inhibitor of cholesteryl ester transfer protein (CETP). Modulates the interaction of APOE with beta-migrating VLDL and inhibits binding of beta-VLDL to the LDL receptor-related protein. Binds free fatty acids and reduces their intracellular esterification. This is Apolipoprotein C-I (APOC1) from Mesocricetus auratus (Golden hamster).